Here is a 404-residue protein sequence, read N- to C-terminus: G1/S-specific cyclin-E2 (404 aa).

The tract at residues 1-41 is disordered; sequence MSRRSSRLQAKQHAQPNQPDSPQETQIIQAKKRKTAQDVKK. Positions 7-28 are enriched in polar residues; sequence RLQAKQHAQPNQPDSPQETQII. At serine 21 the chain carries Phosphoserine. Lysine 348 carries the N6-lactoyllysine modification. The residue at position 383 (serine 383) is a Phosphoserine. Threonine 392 carries the phosphothreonine modification.

Belongs to the cyclin family. Cyclin E subfamily. As to quaternary structure, interacts with the CDK2 (in vivo) and CDK3 (in vitro) protein kinases to form a serine/threonine kinase holoenzyme complex. The cyclin subunit imparts substrate specificity to the complex. Post-translationally, phosphorylation by CDK2 triggers its release from CDK2 and degradation via the ubiquitin proteasome pathway. In terms of processing, lactylated at Lys-348. Delactylated by SIRT3. Highest levels in adult testis, thymus and brain. Lower levels in placenta, spleen and colon.

It localises to the nucleus. Functionally, essential for the control of the cell cycle at the late G1 and early S phase. The sequence is that of G1/S-specific cyclin-E2 (Ccne2) from Mus musculus (Mouse).